A 362-amino-acid polypeptide reads, in one-letter code: Heat-inducible transcription repressor HrcA (362 aa).

It belongs to the HrcA family.

Functionally, negative regulator of class I heat shock genes (grpE-dnaK-dnaJ and groELS operons). Prevents heat-shock induction of these operons. The chain is Heat-inducible transcription repressor HrcA from Bradyrhizobium diazoefficiens (strain JCM 10833 / BCRC 13528 / IAM 13628 / NBRC 14792 / USDA 110).